The following is a 1069-amino-acid chain: Cellulose synthase A catalytic subunit 5 [UDP-forming] (1069 aa).

Met-1 is modified (N-acetylmethionine). Topologically, residues 1–265 (MNTGGRLIAG…KSSKINPYRM (265 aa)) are cytoplasmic. Zn(2+)-binding residues include Cys-39, Cys-42, Cys-58, Cys-61, Cys-66, Cys-69, Cys-81, and Cys-84. An RING-type; degenerate zinc finger spans residues 39-85 (CQICGDEIELSVDGESFVACNECAFPVCRPCYEYERREGNQSCPQCK). A phosphoserine mark is found at Ser-229 and Ser-230. Residues 266 to 286 (LIVLRLVILGLFFHYRILHPV) traverse the membrane as a helical segment. The Extracellular segment spans residues 287 to 288 (ND). A helical transmembrane segment spans residues 289 to 309 (AYALWLISVICEIWFAVSWVL). The Cytoplasmic portion of the chain corresponds to 310–853 (DQFPKWYPIE…INSVVYPWTS (544 aa)). UDP-alpha-D-glucose contacts are provided by Ser-348, Lys-354, Glu-355, and Asp-384. The active site involves Asp-384. Residues 438–464 (VRERRAMKRDYEEFKVKINALVATAQK) are a coiled coil. UDP-alpha-D-glucose is bound at residue Lys-525. Mn(2+) is bound by residues Lys-526 and Asp-550. Asp-770 is a catalytic residue. Residues 854 to 874 (IPLLVYCSLPAICLLTGKFIV) form a helical membrane-spanning segment. At 875–879 (PEISN) the chain is on the extracellular side. Residues 880–900 (YASILFMALFGSIAVTGILEM) form a helical membrane-spanning segment. Topologically, residues 901–915 (QWGKVGIDDWWRNEQ) are cytoplasmic. The helical transmembrane segment at 916 to 936 (FWVIGGVSAHLFALFQGLLKV) threads the bilayer. At 937–965 (LAGVETNFTVTSKAADDGEFSELYIFKWT) the chain is on the extracellular side. Asn-943 carries N-linked (GlcNAc...) asparagine glycosylation. Residues 966–986 (SLLIPPTTLLIINVIGVIVGI) traverse the membrane as a helical segment. Over 987–997 (SDAISNGYDSW) the chain is Cytoplasmic. Residues 998–1018 (GPLFGRLFFAFWVILHLYPFL) form a helical membrane-spanning segment. At 1019–1027 (KGLLGKQDR) the chain is on the extracellular side. The helical transmembrane segment at 1028 to 1048 (MPTIILVWSILLASILTLLWV) threads the bilayer. Residues 1049–1069 (RVNPFVAKGGPILEICGLDCL) lie on the Cytoplasmic side of the membrane.

The protein belongs to the glycosyltransferase 2 family. Plant cellulose synthase subfamily. Requires Zn(2+) as cofactor. Mn(2+) serves as cofactor. As to expression, expressed in young plants, stems and flowers.

Its subcellular location is the cell membrane. It catalyses the reaction [(1-&gt;4)-beta-D-glucosyl](n) + UDP-alpha-D-glucose = [(1-&gt;4)-beta-D-glucosyl](n+1) + UDP + H(+). The protein operates within glycan metabolism; plant cellulose biosynthesis. In terms of biological role, catalytic subunit of cellulose synthase terminal complexes ('rosettes'), required for beta-1,4-glucan microfibril crystallization, a major mechanism of the cell wall formation. This chain is Cellulose synthase A catalytic subunit 5 [UDP-forming], found in Arabidopsis thaliana (Mouse-ear cress).